A 50-amino-acid polypeptide reads, in one-letter code: Defensin-like protein 1 (50 aa).

Disulfide bonds link cysteine 3–cysteine 50, cysteine 14–cysteine 35, cysteine 20–cysteine 44, and cysteine 24–cysteine 46.

This sequence belongs to the DEFL family.

It localises to the secreted. Functionally, possesses antimicrobial activity sensitive to inorganic cations. Has no inhibitory effect on insect gut alpha-amylase. Induces potential changes in fungal membranes and increased K+ efflux and Ca(2+) uptake. Interacts with sphingolipids and ergosterols found in fungal plasma membranes. The protein is Defensin-like protein 1 of Dahlia merckii (Bedding dahlia).